A 93-amino-acid polypeptide reads, in one-letter code: U12-lycotoxin-Ls1c (93 aa).

Positions 1–18 (MKFAVILLFSLVVLAVAS) are cleaved as a signal peptide. The propeptide occupies 19 to 38 (ESVEEVRREIDIEDLPEQQR).

The protein belongs to the neurotoxin 31 family. In terms of processing, contains 5 disulfide bonds. Expressed by the venom gland.

It is found in the secreted. The protein is U12-lycotoxin-Ls1c of Lycosa singoriensis (Wolf spider).